The primary structure comprises 91 residues: Molybdopterin synthase sulfur carrier subunit (91 aa).

Glycine 91 is modified (1-thioglycine; alternate). Glycine 91 carries the post-translational modification Glycyl adenylate; alternate.

It belongs to the MoaD family. MOCS2A subfamily. As to quaternary structure, heterotetramer; composed of 2 small (MOCS2A) and 2 large (MOCS2B) subunits. C-terminal thiocarboxylation occurs in 2 steps, it is first acyl-adenylated (-COAMP) via the hesA/moeB/thiF part of MOCS3, then thiocarboxylated (-COSH) via the rhodanese domain of MOCS3.

It localises to the cytoplasm. Its pathway is cofactor biosynthesis; molybdopterin biosynthesis. Acts as a sulfur carrier required for molybdopterin biosynthesis. Component of the molybdopterin synthase complex that catalyzes the conversion of precursor Z into molybdopterin by mediating the incorporation of 2 sulfur atoms into precursor Z to generate a dithiolene group. In the complex, serves as sulfur donor by being thiocarboxylated (-COSH) at its C-terminus by MOCS3. After interaction with MOCS2B, the sulfur is then transferred to precursor Z to form molybdopterin. The chain is Molybdopterin synthase sulfur carrier subunit from Anopheles gambiae (African malaria mosquito).